The sequence spans 354 residues: Trans-3-hydroxy-L-proline dehydratase (354 aa).

C104 functions as the Proton acceptor in the catalytic mechanism. Residues 105–106 (GH), D269, and 274–275 (GS) each bind substrate.

The protein belongs to the proline racemase family. As to quaternary structure, homodimer. As to expression, ubiquitously expressed.

The catalysed reaction is trans-3-hydroxy-L-proline = 1-pyrroline-2-carboxylate + H2O. Functionally, catalyzes the dehydration of trans-3-hydroxy-L-proline to Delta(1)-pyrroline-2-carboxylate (Pyr2C). May be required to degrade trans-3-hydroxy-L-proline from the diet and originating from the degradation of proteins such as collagen-IV that contain it. In Homo sapiens (Human), this protein is Trans-3-hydroxy-L-proline dehydratase (L3HYPDH).